Reading from the N-terminus, the 115-residue chain is MNAWLLSVLCLLGALAVLVEGVTVQDGDLSFPLESVKQLKHLREVQEPTLMSHKKFALRLPKPVAPELCSQSAFPEALRPLCEKPNAEEILQRLEAIAQDPNTCEICAYAACTGC.

The first 23 residues, 1-23 (MNAWLLSVLCLLGALAVLVEGVT), serve as a signal peptide directing secretion. A propeptide spanning residues 24 to 100 (VQDGDLSFPL…LQRLEAIAQD (77 aa)) is cleaved from the precursor. Disulfide bonds link Cys-69-Cys-82, Cys-104-Cys-112, and Cys-107-Cys-115.

Belongs to the guanylin family. In terms of tissue distribution, intestine and in low abundance in adrenal gland, kidney, and uterus/oviduct.

The protein resides in the secreted. Its function is as follows. Endogenous activator of intestinal guanylate cyclase. It stimulates this enzyme through the same receptor binding region as the heat-stable enterotoxins. This is Guanylin (Guca2a) from Rattus norvegicus (Rat).